The primary structure comprises 134 residues: Small ribosomal subunit protein uS11 (134 aa).

The disordered stretch occupies residues 114–134 (SISDVTPQPHNGCRPPKRRRV).

Belongs to the universal ribosomal protein uS11 family. As to quaternary structure, part of the 30S ribosomal subunit. Interacts with proteins S7 and S18. Binds to IF-3.

In terms of biological role, located on the platform of the 30S subunit, it bridges several disparate RNA helices of the 16S rRNA. Forms part of the Shine-Dalgarno cleft in the 70S ribosome. The polypeptide is Small ribosomal subunit protein uS11 (Corynebacterium efficiens (strain DSM 44549 / YS-314 / AJ 12310 / JCM 11189 / NBRC 100395)).